A 324-amino-acid chain; its full sequence is Glyoxylate/hydroxypyruvate reductase B (324 aa).

Catalysis depends on residues arginine 237 and glutamate 266. The active-site Proton donor is histidine 285.

It belongs to the D-isomer specific 2-hydroxyacid dehydrogenase family. GhrB subfamily. Homodimer.

Its subcellular location is the cytoplasm. The catalysed reaction is glycolate + NADP(+) = glyoxylate + NADPH + H(+). The enzyme catalyses (R)-glycerate + NAD(+) = 3-hydroxypyruvate + NADH + H(+). It carries out the reaction (R)-glycerate + NADP(+) = 3-hydroxypyruvate + NADPH + H(+). In terms of biological role, catalyzes the NADPH-dependent reduction of glyoxylate and hydroxypyruvate into glycolate and glycerate, respectively. The protein is Glyoxylate/hydroxypyruvate reductase B of Shigella boydii serotype 4 (strain Sb227).